We begin with the raw amino-acid sequence, 194 residues long: MKKLFLIIGAPGSGKTTDAEIIAKKHSDLIAHYSTGDLLREEVKKGTPLGATIASFIDNGQLVPLEIVMDTIKNAILNSDKEVIIIDGFPRSVEQMEALDKMLQENPSIKLEAVIEVVVSEETARERVLGRARGADDNVEVFNNRMKLYLEPLNQIEEFYEKKGLLKKIDGERTIEEIVADMESFILQKIDENA.

ATP is bound at residue 12–17 (GSGKTT). The tract at residues 34 to 63 (STGDLLREEVKKGTPLGATIASFIDNGQLV) is NMP. Residues Thr35, Arg40, 61 to 63 (QLV), 88 to 91 (GFPR), and Gln95 each bind AMP. The LID stretch occupies residues 130–136 (GRARGAD). ATP is bound at residue Arg131. Residues Arg133 and Arg145 each contribute to the AMP site. Residue Arg173 coordinates ATP.

It belongs to the adenylate kinase family. As to quaternary structure, monomer.

The protein resides in the cytoplasm. It carries out the reaction AMP + ATP = 2 ADP. It functions in the pathway purine metabolism; AMP biosynthesis via salvage pathway; AMP from ADP: step 1/1. Catalyzes the reversible transfer of the terminal phosphate group between ATP and AMP. Plays an important role in cellular energy homeostasis and in adenine nucleotide metabolism. The sequence is that of Adenylate kinase from Nitratiruptor sp. (strain SB155-2).